The following is a 123-amino-acid chain: Methicillin resistance regulatory protein MecI (123 aa).

Residues 7–71 (EISSAEWEFM…KDNKIFQYYS (65 aa)) constitute a DNA-binding region (H-T-H motif). Positions 74–123 (EESDIKYKTSKNFINKVYKGGFNSLVLNFVEKEDLSQDEIEELRNILNKK) are important for dimerization.

It belongs to the BlaI transcriptional regulatory family. As to quaternary structure, monomer and homodimer. Upon exposure to beta-lactams, proteolytic cleavage at a single site impairs dimerization and abolishes repressor activity.

The protein resides in the cytoplasm. Its function is as follows. Transcriptional repressor that constitutively blocks the transcription of the gene for the penicillin-binding protein MecA. Binds DNA as a dimer. This is Methicillin resistance regulatory protein MecI (mecI) from Staphylococcus aureus (strain Mu50 / ATCC 700699).